The chain runs to 264 residues: Small ribosomal subunit protein eS1 (264 aa).

The residue at position 34 (K34) is an N6-acetyllysine; alternate. K34 participates in a covalent cross-link: Glycyl lysine isopeptide (Lys-Gly) (interchain with G-Cter in SUMO2); alternate. K56 is subject to N6-acetyllysine. Y155 is subject to ADP-ribosyltyrosine. The segment at 233–264 (GEGSSSGKATGDETGAKVERADGYEPPVQESV) is disordered. A phosphoserine mark is found at S236 and S237. Residues 242 to 255 (TGDETGAKVERADG) show a composition bias toward basic and acidic residues. K249 is subject to N6-acetyllysine; alternate. K249 participates in a covalent cross-link: Glycyl lysine isopeptide (Lys-Gly) (interchain with G-Cter in SUMO2); alternate. Y256 bears the Phosphotyrosine mark. Residue S263 is modified to Phosphoserine.

The protein belongs to the eukaryotic ribosomal protein eS1 family. In terms of assembly, component of the small ribosomal subunit. Mature ribosomes consist of a small (40S) and a large (60S) subunit. The 40S subunit contains about 33 different proteins and 1 molecule of RNA (18S). The 60S subunit contains about 49 different proteins and 3 molecules of RNA (28S, 5.8S and 5S). Part of the small subunit (SSU) processome, composed of more than 70 proteins and the RNA chaperone small nucleolar RNA (snoRNA) U3. ADP-ribosylated at Tyr-155 by PARP1 in presence of HPF1.

Its subcellular location is the cytoplasm. The protein localises to the nucleus. It is found in the nucleolus. Its function is as follows. Component of the small ribosomal subunit. The ribosome is a large ribonucleoprotein complex responsible for the synthesis of proteins in the cell. Part of the small subunit (SSU) processome, first precursor of the small eukaryotic ribosomal subunit. During the assembly of the SSU processome in the nucleolus, many ribosome biogenesis factors, an RNA chaperone and ribosomal proteins associate with the nascent pre-rRNA and work in concert to generate RNA folding, modifications, rearrangements and cleavage as well as targeted degradation of pre-ribosomal RNA by the RNA exosome. May play a role during erythropoiesis. The protein is Small ribosomal subunit protein eS1 of Callithrix jacchus (White-tufted-ear marmoset).